The following is a 209-amino-acid chain: Kunitz trypsin inhibitor 1 (209 aa).

The signal sequence occupies residues 1–22 (MKATISITTIFLVVALAAPSLA). Intrachain disulfides connect C63–C107 and C154–C162. Residue N156 is glycosylated (N-linked (GlcNAc...) asparagine).

This sequence belongs to the protease inhibitor I3 (leguminous Kunitz-type inhibitor) family.

Exhibits Kunitz trypsin protease inhibitor activity. The protein is Kunitz trypsin inhibitor 1 of Arabidopsis thaliana (Mouse-ear cress).